The following is a 435-amino-acid chain: Rho GTPase-activating protein 4 (435 aa).

Residues 1–59 (MAKVLKSSQSCHFPSPSSSSSTSCGGGNDGSNRDPHSPFNISRREEEEEEEERSEKERE) form a disordered region. The segment covering 7-23 (SSQSCHFPSPSSSSSTS) has biased composition (low complexity). The CRIB domain maps to 93 to 106 (IGVPTDVRHVAHVT). Residues 138 to 319 (VSTESMQLSY…LIVKTLKDRK (182 aa)) enclose the Rho-GAP domain. The interval 321–343 (SRDKLVPASNPSPRDHNGDQSSS) is disordered.

Functionally, acts as a GTPase activator for the Rac-type GTPase by converting it to an inactive GDP-bound state. Acts as a negative feedback regulator in tolerance to oxygen deprivation which requires ARAC4/ROP2. The protein is Rho GTPase-activating protein 4 (ROPGAP4) of Arabidopsis thaliana (Mouse-ear cress).